Here is a 308-residue protein sequence, read N- to C-terminus: Ectoine dioxygenase (308 aa).

Residue Q131 participates in L-ectoine binding. K137 serves as a coordination point for 2-oxoglutarate. Fe cation-binding residues include H148, D150, and H249.

This sequence belongs to the PhyH family. EctD subfamily. Homodimer. Fe(2+) serves as cofactor.

It catalyses the reaction L-ectoine + 2-oxoglutarate + O2 = 5-hydroxyectoine + succinate + CO2. Involved in the biosynthesis of 5-hydroxyectoine, called compatible solute, which helps organisms to survive extreme osmotic stress by acting as a highly soluble organic osmolyte. Catalyzes the 2-oxoglutarate-dependent selective hydroxylation of L-ectoine to yield (4S,5S)-5-hydroxyectoine. The polypeptide is Ectoine dioxygenase (Bordetella parapertussis (strain 12822 / ATCC BAA-587 / NCTC 13253)).